A 274-amino-acid polypeptide reads, in one-letter code: Diaminopimelate epimerase (274 aa).

Substrate contacts are provided by Asn-11, Gln-44, and Asn-64. Catalysis depends on Cys-73, which acts as the Proton donor. Residues 74-75 (GN), Asn-157, Asn-190, and 208-209 (ER) contribute to the substrate site. Cys-217 serves as the catalytic Proton acceptor. 218-219 (GS) contacts substrate.

It belongs to the diaminopimelate epimerase family. As to quaternary structure, homodimer.

The protein localises to the cytoplasm. It catalyses the reaction (2S,6S)-2,6-diaminopimelate = meso-2,6-diaminopimelate. The protein operates within amino-acid biosynthesis; L-lysine biosynthesis via DAP pathway; DL-2,6-diaminopimelate from LL-2,6-diaminopimelate: step 1/1. Functionally, catalyzes the stereoinversion of LL-2,6-diaminopimelate (L,L-DAP) to meso-diaminopimelate (meso-DAP), a precursor of L-lysine and an essential component of the bacterial peptidoglycan. In Escherichia coli O81 (strain ED1a), this protein is Diaminopimelate epimerase.